The primary structure comprises 224 residues: Virulence transcriptional regulatory protein PhoP (224 aa).

One can recognise a Response regulatory domain in the interval 3 to 117 (RVLVVEDNAL…EVMARMQALM (115 aa)). Asp-52 carries the post-translational modification 4-aspartylphosphate. The segment at residues 125 to 223 (SQVINIPPFQ…VRGQGYLFEL (99 aa)) is a DNA-binding region (ompR/PhoB-type).

Phosphorylated by PhoQ.

It is found in the cytoplasm. Member of the two-component regulatory system PhoQ/PhoP which regulates the expression of genes involved in virulence and resistance to host defense antimicrobial peptides. In Salmonella choleraesuis (strain SC-B67), this protein is Virulence transcriptional regulatory protein PhoP (phoP).